The following is a 255-amino-acid chain: NAD kinase (255 aa).

D44 acts as the Proton acceptor in catalysis. Residues 44-45, H49, 114-115, D144, A152, 155-160, and Q216 each bind NAD(+); these read DG, NE, and SAYNLS.

The protein belongs to the NAD kinase family. Requires a divalent metal cation as cofactor.

It localises to the cytoplasm. The enzyme catalyses NAD(+) + ATP = ADP + NADP(+) + H(+). In terms of biological role, involved in the regulation of the intracellular balance of NAD and NADP, and is a key enzyme in the biosynthesis of NADP. Catalyzes specifically the phosphorylation on 2'-hydroxyl of the adenosine moiety of NAD to yield NADP. This chain is NAD kinase, found in Rickettsia peacockii (strain Rustic).